Consider the following 853-residue polypeptide: DNA mismatch repair protein MutS (853 aa).

614-621 (GPNMGGKS) is an ATP binding site.

The protein belongs to the DNA mismatch repair MutS family.

In terms of biological role, this protein is involved in the repair of mismatches in DNA. It is possible that it carries out the mismatch recognition step. This protein has a weak ATPase activity. This is DNA mismatch repair protein MutS from Citrobacter koseri (strain ATCC BAA-895 / CDC 4225-83 / SGSC4696).